Here is a 155-residue protein sequence, read N- to C-terminus: MSQVILDLQVACEDTTGLPDEAQFQTWLNAVVPQFQEESEVTVRLVDEAESHDLNLTYRGMDKPTNVLSFPFEAPPGIDMPLLGDLIICRQVVEREAREQEKPLEAHWAHMVVHGSLHLLGYDHIEDDEAEEMEGIETEIMLALGFDDPYIAEKA.

Residues H114, H118, and H124 each coordinate Zn(2+).

The protein belongs to the endoribonuclease YbeY family. Requires Zn(2+) as cofactor.

Its subcellular location is the cytoplasm. Its function is as follows. Single strand-specific metallo-endoribonuclease involved in late-stage 70S ribosome quality control and in maturation of the 3' terminus of the 16S rRNA. The polypeptide is Endoribonuclease YbeY (Cronobacter sakazakii (strain ATCC BAA-894) (Enterobacter sakazakii)).